The sequence spans 1218 residues: Mgp-operon protein 3 (1218 aa).

Positions 1–25 (MKSKLKLKRYLLFLPLLPLGTLSLA) are cleaved as a signal peptide. Disordered stretches follow at residues 109 to 129 (QESQ…SGSN), 213 to 245 (HFGS…GFKL), 262 to 353 (EPLD…AVVS), and 411 to 440 (QDAT…PALT). A compositionally biased stretch (low complexity) spans 116 to 129 (NGSQSGSSDTSGSN). The segment covering 217–231 (GQESSWNSQRSQKGL) has biased composition (polar residues). Residues 265 to 286 (DSTKEGKGKDESSWKNSEKTTA) are compositionally biased toward basic and acidic residues. Low complexity predominate over residues 301 to 342 (AGSASSLQGNGSNSSGLKSLLRSAPVSVPPSSTSNQTLSLSN). The segment covering 411–428 (QDATSTNLPHAAGASQTG) has biased composition (polar residues). A helical membrane pass occupies residues 1121 to 1141 (VGSSVGILLILLILGLGIGIP). The segment covering 1192–1204 (NNAAPKAPVKPAA) has biased composition (low complexity). The disordered stretch occupies residues 1192-1218 (NNAAPKAPVKPAAPTAPRPPVQPPKKA). Over residues 1205–1218 (PTAPRPPVQPPKKA) the composition is skewed to pro residues.

It localises to the cell membrane. The polypeptide is Mgp-operon protein 3 (Mycoplasma pneumoniae (strain ATCC 29342 / M129 / Subtype 1) (Mycoplasmoides pneumoniae)).